A 210-amino-acid chain; its full sequence is Imidazoleglycerol-phosphate dehydratase (210 aa).

The protein belongs to the imidazoleglycerol-phosphate dehydratase family.

The enzyme catalyses D-erythro-1-(imidazol-4-yl)glycerol 3-phosphate = 3-(imidazol-4-yl)-2-oxopropyl phosphate + H2O. The protein operates within amino-acid biosynthesis; L-histidine biosynthesis; L-histidine from 5-phospho-alpha-D-ribose 1-diphosphate: step 6/9. This is Imidazoleglycerol-phosphate dehydratase (HIS3) from Candida glabrata (strain ATCC 2001 / BCRC 20586 / JCM 3761 / NBRC 0622 / NRRL Y-65 / CBS 138) (Yeast).